Consider the following 250-residue polypeptide: L-cystine transport system ATP-binding protein TcyN (250 aa).

Residues 4-244 form the ABC transporter domain; it reads IEVKNLVKKF…PEQPRTRQFL (241 aa). Residue 36–43 participates in ATP binding; it reads GPSGSGKT.

Belongs to the ABC transporter superfamily. As to quaternary structure, the complex is composed of two ATP-binding proteins (TcyN), two transmembrane proteins (TcyL) and a solute-binding protein (TcyJ).

It is found in the cell inner membrane. The catalysed reaction is L-cystine(out) + ATP + H2O = L-cystine(in) + ADP + phosphate + H(+). The enzyme catalyses D-cystine(out) + ATP + H2O = D-cystine(in) + ADP + phosphate + H(+). The TcyJLN system is inhibited by L-cystine, L-cysteine, DL-2,6-diaminopimelic acid and L-cystathionine, and is stimulated by D-cysteine. Its function is as follows. Part of the ABC transporter complex TcyJLN involved in L-cystine import. This high affinity cystine transporter is involved in resistance to oxidative stress by forming a L-cysteine/L-cystine shuttle system with the EamA transporter, which exports L-cysteine as reducing equivalents to the periplasm to prevent the cells from oxidative stress. Exported L-cysteine can reduce the periplasmic hydrogen peroxide to water, and then generated L-cystine is imported back into the cytoplasm via the TcyJLN complex. Functions at low cystine concentrations. The system can also transport L-cysteine, diaminopimelic acid (DAP), djenkolate, lanthionine, D-cystine, homocystine, and it mediates accumulation of the toxic compounds L-selenaproline (SCA) and L-selenocystine (SeCys). Could also facilitate threonine efflux. Responsible for energy coupling to the transport system. The polypeptide is L-cystine transport system ATP-binding protein TcyN (Escherichia coli (strain K12)).